The sequence spans 998 residues: DNA damage-induced apoptosis suppressor protein (998 aa).

A disordered region spans residues 815–834; the sequence is DKQQASPSCPKNIKTPSQKI. Residues 817–834 are compositionally biased toward polar residues; the sequence is QQASPSCPKNIKTPSQKI.

Highly expressed in colorectal and lung cancer tissues.

Its subcellular location is the cytoplasm. The protein localises to the nucleus. In terms of biological role, may be an anti-apoptotic protein involved in DNA repair or cell survival. In Homo sapiens (Human), this protein is DNA damage-induced apoptosis suppressor protein (DDIAS).